The sequence spans 216 residues: Pyrophosphatase PpaX (216 aa).

The active-site Nucleophile is the Asp12.

This sequence belongs to the HAD-like hydrolase superfamily. PpaX family. It depends on Mg(2+) as a cofactor.

It catalyses the reaction diphosphate + H2O = 2 phosphate + H(+). In terms of biological role, hydrolyzes pyrophosphate formed during P-Ser-HPr dephosphorylation by HPrK/P. Might play a role in controlling the intracellular pyrophosphate pool. The polypeptide is Pyrophosphatase PpaX (Bacillus velezensis (strain DSM 23117 / BGSC 10A6 / LMG 26770 / FZB42) (Bacillus amyloliquefaciens subsp. plantarum)).